A 201-amino-acid polypeptide reads, in one-letter code: MNVNLYCPNGEHDNNISFIMPSKTNAVIVYLFKLDIEHPPTYNVNAKTRLVSGYENSRPININLRSITPSLNGTRGAYVISCIRAPRLYRDLFAYNKYTAPLGFVVTRTHAELQVWHILSVRKTFEAKSTRSVTGMLAHTDNGPDKFYAKDLMIMSGNVSVHFINNLQKCRAHHKDIDIFKHLCPELQIDNSVVQLETRSS.

This is an uncharacterized protein from Lepidoptera (butterflies and moths).